A 504-amino-acid chain; its full sequence is SPbeta prophage-derived uncharacterized protein YorI (504 aa).

In Bacillus subtilis (strain 168), this protein is SPbeta prophage-derived uncharacterized protein YorI (yorI).